We begin with the raw amino-acid sequence, 395 residues long: Putative pyridoxal phosphate-dependent acyltransferase (395 aa).

110–111 contributes to the pyridoxal 5'-phosphate binding site; it reads GF. H135 serves as a coordination point for substrate. Pyridoxal 5'-phosphate-binding positions include S185, 210–213, and 240–243; these read DDAH and TLSK. K243 is subject to N6-(pyridoxal phosphate)lysine. Residue T357 coordinates substrate.

The protein belongs to the class-II pyridoxal-phosphate-dependent aminotransferase family. As to quaternary structure, homodimer. Pyridoxal 5'-phosphate is required as a cofactor.

This Staphylococcus aureus (strain Mu50 / ATCC 700699) protein is Putative pyridoxal phosphate-dependent acyltransferase.